A 207-amino-acid polypeptide reads, in one-letter code: MTRLNVKPTRMELNNLKARLKTAVRGHKLLKDKRDELMRRFIESVRENNQLRQKVESALVGHLQDFVMAKALESDLMVEEIFAVPMREVNLHVETENIMSVRVPKMHAHIDNPYGDDEGDVVYSYVASNSQMDETIESMSDLLPDLLRLAEIEKSCQLMADEIEKTRRRVNGLEYATIPDLKETIYYIEMKLEEAERASLVRMMKVK.

Belongs to the V-ATPase D subunit family.

Functionally, produces ATP from ADP in the presence of a proton gradient across the membrane. In Streptococcus gordonii (strain Challis / ATCC 35105 / BCRC 15272 / CH1 / DL1 / V288), this protein is V-type ATP synthase subunit D.